A 167-amino-acid polypeptide reads, in one-letter code: ATP synthase subunit b (167 aa).

The helical transmembrane segment at Thr-10 to Phe-30 threads the bilayer.

This sequence belongs to the ATPase B chain family. In terms of assembly, F-type ATPases have 2 components, F(1) - the catalytic core - and F(0) - the membrane proton channel. F(1) has five subunits: alpha(3), beta(3), gamma(1), delta(1), epsilon(1). F(0) has three main subunits: a(1), b(2) and c(10-14). The alpha and beta chains form an alternating ring which encloses part of the gamma chain. F(1) is attached to F(0) by a central stalk formed by the gamma and epsilon chains, while a peripheral stalk is formed by the delta and b chains.

Its subcellular location is the cell membrane. F(1)F(0) ATP synthase produces ATP from ADP in the presence of a proton or sodium gradient. F-type ATPases consist of two structural domains, F(1) containing the extramembraneous catalytic core and F(0) containing the membrane proton channel, linked together by a central stalk and a peripheral stalk. During catalysis, ATP synthesis in the catalytic domain of F(1) is coupled via a rotary mechanism of the central stalk subunits to proton translocation. Functionally, component of the F(0) channel, it forms part of the peripheral stalk, linking F(1) to F(0). In Alkaliphilus oremlandii (strain OhILAs) (Clostridium oremlandii (strain OhILAs)), this protein is ATP synthase subunit b.